Here is a 174-residue protein sequence, read N- to C-terminus: Glycine-rich protein 5 (174 aa).

Residues 1–22 (MASKSLFLVALLVGSFAFTSFA) form the signal peptide.

As to expression, mostly expressed in immature seed pods, and, to a lower extent, in stems and leaves. Present in phloem and epiderm in leaves, stems, flowers and fruits.

It is found in the vacuole. Functionally, involved in organ growth by promoting cell elongation processes. The sequence is that of Glycine-rich protein 5 from Arabidopsis thaliana (Mouse-ear cress).